Reading from the N-terminus, the 418-residue chain is Cyclin-A1 (418 aa).

Belongs to the cyclin family. Cyclin AB subfamily. In terms of assembly, interacts with the CDK1 and the CDK2 protein kinases to form a serine/threonine kinase holoenzyme complex. The cyclin subunit imparts substrate specificity to the complex.

It is found in the nucleus. May be involved in the control of the cell cycle at the G1/S (start) and G2/M (mitosis) transitions. The polypeptide is Cyclin-A1 (ccna1) (Xenopus laevis (African clawed frog)).